The primary structure comprises 140 residues: Nucleoside diphosphate kinase (140 aa).

ATP is bound by residues Lys11, Phe59, Arg87, Thr93, Arg104, and Asn114. The Pros-phosphohistidine intermediate role is filled by His117.

It belongs to the NDK family. Homotetramer. The cofactor is Mg(2+).

It is found in the cytoplasm. The catalysed reaction is a 2'-deoxyribonucleoside 5'-diphosphate + ATP = a 2'-deoxyribonucleoside 5'-triphosphate + ADP. The enzyme catalyses a ribonucleoside 5'-diphosphate + ATP = a ribonucleoside 5'-triphosphate + ADP. Functionally, major role in the synthesis of nucleoside triphosphates other than ATP. The ATP gamma phosphate is transferred to the NDP beta phosphate via a ping-pong mechanism, using a phosphorylated active-site intermediate. The polypeptide is Nucleoside diphosphate kinase (Azorhizobium caulinodans (strain ATCC 43989 / DSM 5975 / JCM 20966 / LMG 6465 / NBRC 14845 / NCIMB 13405 / ORS 571)).